A 123-amino-acid chain; its full sequence is Small ribosomal subunit protein uS12 (123 aa).

The disordered stretch occupies residues 1–32 (MPTIQQLVRKGRKDKKAKVKTAALKGSPQRRG). The span at 9–19 (RKGRKDKKAKV) shows a compositional bias: basic residues. Asp89 bears the 3-methylthioaspartic acid mark.

The protein belongs to the universal ribosomal protein uS12 family. In terms of assembly, part of the 30S ribosomal subunit. Contacts proteins S8 and S17. May interact with IF1 in the 30S initiation complex.

In terms of biological role, with S4 and S5 plays an important role in translational accuracy. Functionally, interacts with and stabilizes bases of the 16S rRNA that are involved in tRNA selection in the A site and with the mRNA backbone. Located at the interface of the 30S and 50S subunits, it traverses the body of the 30S subunit contacting proteins on the other side and probably holding the rRNA structure together. The combined cluster of proteins S8, S12 and S17 appears to hold together the shoulder and platform of the 30S subunit. The protein is Small ribosomal subunit protein uS12 of Corynebacterium kroppenstedtii (strain DSM 44385 / JCM 11950 / CIP 105744 / CCUG 35717).